We begin with the raw amino-acid sequence, 236 residues long: Small ribosomal subunit protein uS3 (236 aa).

The KH type-2 domain occupies 39-107 (IRLYVLEELK…ETSLNIVEIH (69 aa)).

Belongs to the universal ribosomal protein uS3 family. In terms of assembly, part of the 30S ribosomal subunit. Forms a tight complex with proteins S10 and S14.

Its function is as follows. Binds the lower part of the 30S subunit head. Binds mRNA in the 70S ribosome, positioning it for translation. The sequence is that of Small ribosomal subunit protein uS3 from Bartonella quintana (strain Toulouse) (Rochalimaea quintana).